A 254-amino-acid chain; its full sequence is Lipid uptake coordinator A (254 aa).

4 consecutive transmembrane segments (helical) span residues 5-25 (VAVL…FYFV), 44-64 (LRIA…FTLL), 85-105 (IMAH…EVWL), and 114-134 (LFGI…GFYL). The interval 143-254 (PPPKPLKPKK…SGVQVAKVDE (112 aa)) is disordered. Positions 148 to 163 (LKPKKPKQRRLRRKKT) are enriched in basic residues. The segment covering 169–191 (AEPEAAEEAENTELAAQEDEEAV) has biased composition (acidic residues). Residues 192 to 220 (EAPPESIESPGGEPESATREAPAAETATA) show a composition bias toward low complexity. The span at 227–244 (LRNRRPTGKTSHRRRRTR) shows a compositional bias: basic residues.

Interacts with the Mce1 and Mce4 accessory subunits Rv0199/OmamA, Rv0177/Mam1C and Rv3492c/Mam4B.

The protein localises to the cell membrane. Its function is as follows. Required for the import of both fatty acids and cholesterol during growth in macrophages and in axenic culture. Facilitates the uptake of these lipids by stabilizing protein subunits of the Mce1 and Mce4 multi-subunit transporters, which transport fatty acids and cholesterol, respectively. Required for full virulence in vivo. This is Lipid uptake coordinator A from Mycobacterium tuberculosis (strain ATCC 25618 / H37Rv).